A 606-amino-acid polypeptide reads, in one-letter code: Mannan endo-1,4-beta-mannosidase A (606 aa).

The first 19 residues, 1-19 (MKSLNVILTLLSLIISVLS), serve as a signal peptide directing secretion. A CBM6 domain is found at 22–140 (VYYEAEDGKL…WMWVDAFVIN (119 aa)). The GH26 domain maps to 164–458 (PAAKKLYDFL…FNHKTVMNMD (295 aa)). A substrate-binding site is contributed by tryptophan 285. The active-site Proton donor is glutamate 318. Substrate is bound by residues tryptophan 323 and tyrosine 378. Glutamate 406 serves as the catalytic Nucleophile. Residues 472 to 489 (SGSSHNGNSESNSNTGNS) are linker. CBM10 domains lie at 491–527 (ECWSINLGYPCCIGDYVVTTDENGDWGVENNEWCGIV), 530–566 (SCWSEPLGYPCCVGNTVISADESGDWGVENNEWCGIV), and 569–605 (SCWAEFLGYPCCVGNTVISTDEFGDWGVENDDWCGIL). Residue tryptophan 493 coordinates substrate.

Belongs to the glycosyl hydrolase 26 family.

It catalyses the reaction Random hydrolysis of (1-&gt;4)-beta-D-mannosidic linkages in mannans, galactomannans and glucomannans.. In terms of biological role, hydrolyzes 1,4-beta linked polysaccharide backbones of mannans, one of the major hemicellulose components in hardwoods and softwoods. Shows very high activity against mannohexaose but not against mannopentaose and smaller mannooligosaccharides. The major products released from mannooligosaccharide hydrolysis are mannose and mannobiose. The reiterated 40 AA domain is involved in binding the cellulase-hemicellulase complex. This Piromyces sp protein is Mannan endo-1,4-beta-mannosidase A (MANA).